Here is a 288-residue protein sequence, read N- to C-terminus: Polyamine aminopropyltransferase (288 aa).

The 230-residue stretch at 9 to 238 (ETLHDQFGQY…GIMTFAWATD (230 aa)) folds into the PABS domain. Gln-33 provides a ligand contact to S-methyl-5'-thioadenosine. His-64 and Asp-88 together coordinate spermidine. Residues Glu-108 and 140–141 (DG) each bind S-methyl-5'-thioadenosine. The active-site Proton acceptor is the Asp-158. 158-161 (DCTD) is a binding site for spermidine. Pro-165 contributes to the S-methyl-5'-thioadenosine binding site.

It belongs to the spermidine/spermine synthase family. In terms of assembly, homodimer or homotetramer.

The protein resides in the cytoplasm. It catalyses the reaction S-adenosyl 3-(methylsulfanyl)propylamine + putrescine = S-methyl-5'-thioadenosine + spermidine + H(+). Its pathway is amine and polyamine biosynthesis; spermidine biosynthesis; spermidine from putrescine: step 1/1. In terms of biological role, catalyzes the irreversible transfer of a propylamine group from the amino donor S-adenosylmethioninamine (decarboxy-AdoMet) to putrescine (1,4-diaminobutane) to yield spermidine. This chain is Polyamine aminopropyltransferase, found in Escherichia coli (strain ATCC 8739 / DSM 1576 / NBRC 3972 / NCIMB 8545 / WDCM 00012 / Crooks).